Reading from the N-terminus, the 131-residue chain is Chromatin accessibility complex protein 1 (131 aa).

Ala2 is modified (N-acetylalanine). A coiled-coil region spans residues 100 to 124; sequence ASKYLKMLKEEKREEDEENDNDNES. An N6-acetyllysine modification is found at Lys102. Residues 109–131 are disordered; it reads EEKREEDEENDNDNESDHDEADS. The span at 112–131 shows a compositional bias: acidic residues; it reads REEDEENDNDNESDHDEADS. Ser124 bears the Phosphoserine mark.

In terms of assembly, heterodimer with POLE3; binds to DNA. Component of the CHRAC ISWI chromatin remodeling complex at least composed of SMARCA5/SNF2H, BAZ1A/ACF1, CHRAC1 and POLE3; the complex preferentially binds DNA through the CHRAC1-POLE3 heterodimer and possesses ATP-dependent nucleosome-remodeling activity. Within the complex, the heterodimer with POLE3 interacts with SMARCA5/SNF2H; the interaction is direct and enhances nucleosome sliding activity by the SMARCA5/SNF2H and BAZ1A/ACF1 interaction. Within the complex, the heterodimer with POLE3 interacts with BAZ1A/ACF1; the interactions are direct. Expressed in heart, brain, placenta, lung, liver, skeletal muscle, kidney and pancreas.

It localises to the nucleus. Forms a complex with DNA polymerase epsilon subunit POLE3 and binds naked DNA, which is then incorporated into chromatin, aided by the nucleosome remodeling activity of ISWI/SNF2H and ACF1. Does not enhance nucleosome sliding activity of the ACF-5 ISWI chromatin remodeling complex. In Homo sapiens (Human), this protein is Chromatin accessibility complex protein 1 (CHRAC1).